The chain runs to 582 residues: Probable DNA ligase (582 aa).

Glutamate 248 is a binding site for ATP. Lysine 250 serves as the catalytic N6-AMP-lysine intermediate. 6 residues coordinate ATP: arginine 255, arginine 270, glutamate 299, phenylalanine 339, arginine 416, and lysine 422.

It belongs to the ATP-dependent DNA ligase family. Mg(2+) is required as a cofactor.

The enzyme catalyses ATP + (deoxyribonucleotide)n-3'-hydroxyl + 5'-phospho-(deoxyribonucleotide)m = (deoxyribonucleotide)n+m + AMP + diphosphate.. In terms of biological role, DNA ligase that seals nicks in double-stranded DNA during DNA replication, DNA recombination and DNA repair. This chain is Probable DNA ligase, found in Persephonella marina (strain DSM 14350 / EX-H1).